The chain runs to 805 residues: Kinesin-like protein KIP3 (805 aa).

Residues 10 to 438 form the Kinesin motor domain; it reads SIVVAIRVRP…LKYANRAKEI (429 aa). 192–199 is a binding site for ATP; the sequence is GATGCGKT. The stretch at 449–481 forms a coiled coil; that stretch reads LSRHVGSYLKMITEQKRQIEELREREEKMISLK. The tract at residues 720–805 is disordered; that stretch reads NFSQKKVKWT…HQSLLATARK (86 aa). The span at 764-773 shows a compositional bias: polar residues; sequence MQDTTFNEQG. Residues 774 to 783 are compositionally biased toward low complexity; that stretch reads PSTPSAPTTA. The span at 792 to 805 shows a compositional bias: polar residues; the sequence is SLLTHQSLLATARK.

The protein belongs to the TRAFAC class myosin-kinesin ATPase superfamily. Kinesin family. Kinesin II subfamily.

Its subcellular location is the cytoplasm. The protein resides in the cytoskeleton. The chain is Kinesin-like protein KIP3 (KIP3) from Saccharomyces cerevisiae (strain ATCC 204508 / S288c) (Baker's yeast).